Consider the following 369-residue polypeptide: Deoxyuridine 5'-triphosphate nucleotidohydrolase (369 aa).

Substrate-binding positions include 258–260 (RSS) and 364–365 (FG).

Belongs to the dUTPase family. The cofactor is Mg(2+).

The enzyme catalyses dUTP + H2O = dUMP + diphosphate + H(+). Involved in nucleotide metabolism: produces dUMP, the immediate precursor of thymidine nucleotides and decreases the intracellular concentration of dUTP to avoid uracil incorporation into viral DNA. In Homo sapiens (Human), this protein is Deoxyuridine 5'-triphosphate nucleotidohydrolase.